We begin with the raw amino-acid sequence, 523 residues long: Bifunctional purine biosynthesis protein PurH (523 aa).

The region spanning 1–154 (MTATAGSNKR…KNHPSVAVVT (154 aa)) is the MGS-like domain.

Belongs to the PurH family.

The enzyme catalyses (6R)-10-formyltetrahydrofolate + 5-amino-1-(5-phospho-beta-D-ribosyl)imidazole-4-carboxamide = 5-formamido-1-(5-phospho-D-ribosyl)imidazole-4-carboxamide + (6S)-5,6,7,8-tetrahydrofolate. The catalysed reaction is IMP + H2O = 5-formamido-1-(5-phospho-D-ribosyl)imidazole-4-carboxamide. It participates in purine metabolism; IMP biosynthesis via de novo pathway; 5-formamido-1-(5-phospho-D-ribosyl)imidazole-4-carboxamide from 5-amino-1-(5-phospho-D-ribosyl)imidazole-4-carboxamide (10-formyl THF route): step 1/1. The protein operates within purine metabolism; IMP biosynthesis via de novo pathway; IMP from 5-formamido-1-(5-phospho-D-ribosyl)imidazole-4-carboxamide: step 1/1. The sequence is that of Bifunctional purine biosynthesis protein PurH from Streptomyces coelicolor (strain ATCC BAA-471 / A3(2) / M145).